A 673-amino-acid polypeptide reads, in one-letter code: UvrABC system protein B (673 aa).

In terms of domain architecture, Helicase ATP-binding spans Glu-26–Arg-414. Gly-39–Thr-46 serves as a coordination point for ATP. The Beta-hairpin signature appears at Tyr-92–Ile-115. The 167-residue stretch at Gln-431–Leu-597 folds into the Helicase C-terminal domain. Positions Gln-633–Leu-668 constitute a UVR domain.

The protein belongs to the UvrB family. Forms a heterotetramer with UvrA during the search for lesions. Interacts with UvrC in an incision complex.

Its subcellular location is the cytoplasm. The UvrABC repair system catalyzes the recognition and processing of DNA lesions. A damage recognition complex composed of 2 UvrA and 2 UvrB subunits scans DNA for abnormalities. Upon binding of the UvrA(2)B(2) complex to a putative damaged site, the DNA wraps around one UvrB monomer. DNA wrap is dependent on ATP binding by UvrB and probably causes local melting of the DNA helix, facilitating insertion of UvrB beta-hairpin between the DNA strands. Then UvrB probes one DNA strand for the presence of a lesion. If a lesion is found the UvrA subunits dissociate and the UvrB-DNA preincision complex is formed. This complex is subsequently bound by UvrC and the second UvrB is released. If no lesion is found, the DNA wraps around the other UvrB subunit that will check the other stand for damage. The sequence is that of UvrABC system protein B from Salmonella paratyphi A (strain ATCC 9150 / SARB42).